Here is a 311-residue protein sequence, read N- to C-terminus: Methionyl-tRNA formyltransferase (311 aa).

110–113 (SLLP) serves as a coordination point for (6S)-5,6,7,8-tetrahydrofolate.

It belongs to the Fmt family.

It carries out the reaction L-methionyl-tRNA(fMet) + (6R)-10-formyltetrahydrofolate = N-formyl-L-methionyl-tRNA(fMet) + (6S)-5,6,7,8-tetrahydrofolate + H(+). Attaches a formyl group to the free amino group of methionyl-tRNA(fMet). The formyl group appears to play a dual role in the initiator identity of N-formylmethionyl-tRNA by promoting its recognition by IF2 and preventing the misappropriation of this tRNA by the elongation apparatus. This is Methionyl-tRNA formyltransferase from Streptococcus thermophilus (strain ATCC BAA-250 / LMG 18311).